The following is a 367-amino-acid chain: tRNA-specific 2-thiouridylase MnmA (367 aa).

Residues 12–19 and Met38 each bind ATP; that span reads GMSGGVDS. An interaction with target base in tRNA region spans residues 98 to 100; it reads NPD. Cys103 serves as the catalytic Nucleophile. The cysteines at positions 103 and 200 are disulfide-linked. Gly128 contributes to the ATP binding site. The tract at residues 150 to 152 is interaction with tRNA; it reads KDQ. Cys200 serves as the catalytic Cysteine persulfide intermediate. The interaction with tRNA stretch occupies residues 312-313; it reads RY.

This sequence belongs to the MnmA/TRMU family. Interacts with TusE.

Its subcellular location is the cytoplasm. It carries out the reaction S-sulfanyl-L-cysteinyl-[protein] + uridine(34) in tRNA + AH2 + ATP = 2-thiouridine(34) in tRNA + L-cysteinyl-[protein] + A + AMP + diphosphate + H(+). Its function is as follows. Catalyzes the 2-thiolation of uridine at the wobble position (U34) of tRNA(Lys), tRNA(Glu) and tRNA(Gln), leading to the formation of s(2)U34, the first step of tRNA-mnm(5)s(2)U34 synthesis. Sulfur is provided by IscS, via a sulfur-relay system. Binds ATP and its substrate tRNAs. This Blochmanniella pennsylvanica (strain BPEN) protein is tRNA-specific 2-thiouridylase MnmA.